The following is a 254-amino-acid chain: MATSKVVFITGATSGFGEAAAQVFADAGWSLVLSGRRFERLKTLQDKLASQVPVHIIELDVRDSDSVAAAVAALPADFADITTLINNAGLALSPQPAQKVDLDDWKTMIDTNVTGLVNVTHALLPTLINHGAGASIINIGSIAGQWPYPGSHVYGASKAFVKQFSYNLRCDLLGTGVRVTDLAPGIAETEFTLVRTKGDQAASDNLYRGTTPLSARDIAEQMFYIATLPDHMNINRVEVMPVRQAWQPFAIDRD.

Position 8–32 (8–32 (FITGATSGFGEAAAQVFADAGWSLV)) interacts with NADP(+). Residue Ser141 coordinates substrate. Residue Tyr154 is the Proton acceptor of the active site.

It belongs to the short-chain dehydrogenases/reductases (SDR) family. Homodimer and heterotetramer.

The catalysed reaction is 2-hydroxyethane-1-sulfonate + NADP(+) = sulfoacetaldehyde + NADPH + H(+). It participates in organosulfur degradation. Functionally, catalyzes the formation of isethionate from 2-sulfoacetaldehyde in the deaminative pathway of taurine. The enzyme is specific for NADPH; NADH is not a substrate. This Klebsiella oxytoca protein is Sulfoacetaldehyde reductase (isfD).